Reading from the N-terminus, the 224-residue chain is Peroxiredoxin-6 (224 aa).

The Thioredoxin domain occupies L4–L168. The required and sufficient for targeting to lysosomes and lamellar bodies stretch occupies residues D30–P39. C46 functions as the Cysteine sulfenic acid (-SOH) intermediate; for peroxidase activity in the catalytic mechanism. Residue Y88 is modified to Phosphotyrosine. D139 acts as the For phospholipase activity in catalysis. T176 is subject to Phosphothreonine; by MAPK.

The protein belongs to the peroxiredoxin family. Prx6 subfamily. As to quaternary structure, homodimer. Interacts with GSTP1; mediates PRDX6 glutathionylation and regeneration. Irreversibly inactivated by overoxidation of Cys-46 to sulfinic acid (Cys-SO(2)H) and sulfonic acid (Cys-SO(3)H) forms upon oxidative stress. Post-translationally, phosphorylation at Thr-176 by MAP kinases increases the phospholipase activity of the enzyme. The phosphorylated form exhibits a greater lysophosphatidylcholine acyltransferase activity compared to the non-phosphorylated form.

It is found in the cytoplasm. It localises to the lysosome. The enzyme catalyses a hydroperoxide + 2 glutathione = an alcohol + glutathione disulfide + H2O. It carries out the reaction a 1,2-diacyl-sn-glycero-3-phosphocholine + H2O = a 1-acyl-sn-glycero-3-phosphocholine + a fatty acid + H(+). It catalyses the reaction a 1-acyl-sn-glycero-3-phosphocholine + an acyl-CoA = a 1,2-diacyl-sn-glycero-3-phosphocholine + CoA. The catalysed reaction is 1-hexadecanoyl-sn-glycero-3-phosphocholine + hexadecanoyl-CoA = 1,2-dihexadecanoyl-sn-glycero-3-phosphocholine + CoA. The enzyme catalyses 1,2-dihexadecanoyl-sn-glycero-3-phosphocholine + H2O = 1-hexadecanoyl-sn-glycero-3-phosphocholine + hexadecanoate + H(+). Thiol-specific peroxidase that catalyzes the reduction of hydrogen peroxide and organic hydroperoxides to water and alcohols, respectively. Can reduce H(2)O(2) and short chain organic, fatty acid, and phospholipid hydroperoxides. Also has phospholipase activity, and can therefore either reduce the oxidized sn-2 fatty acyl group of phospholipids (peroxidase activity) or hydrolyze the sn-2 ester bond of phospholipids (phospholipase activity). These activities are dependent on binding to phospholipids at acidic pH and to oxidized phospholipds at cytosolic pH. Plays a role in cell protection against oxidative stress by detoxifying peroxides and in phospholipid homeostasis. Exhibits acyl-CoA-dependent lysophospholipid acyltransferase which mediates the conversion of lysophosphatidylcholine (1-acyl-sn-glycero-3-phosphocholine or LPC) into phosphatidylcholine (1,2-diacyl-sn-glycero-3-phosphocholine or PC). Shows a clear preference for LPC as the lysophospholipid and for palmitoyl CoA as the fatty acyl substrate. The chain is Peroxiredoxin-6 (PRDX6) from Gallus gallus (Chicken).